A 138-amino-acid polypeptide reads, in one-letter code: Small ribosomal subunit protein uS8 (138 aa).

This sequence belongs to the universal ribosomal protein uS8 family. As to quaternary structure, part of the 30S ribosomal subunit. Contacts proteins S5 and S12.

In terms of biological role, one of the primary rRNA binding proteins, it binds directly to 16S rRNA central domain where it helps coordinate assembly of the platform of the 30S subunit. In Thermus thermophilus (strain ATCC BAA-163 / DSM 7039 / HB27), this protein is Small ribosomal subunit protein uS8 (rpsH).